Consider the following 489-residue polypeptide: Glutamyl-tRNA(Gln) amidotransferase subunit A (489 aa).

Active-site charge relay system residues include K80 and S160. Catalysis depends on S184, which acts as the Acyl-ester intermediate.

This sequence belongs to the amidase family. GatA subfamily. As to quaternary structure, heterotrimer of A, B and C subunits.

The catalysed reaction is L-glutamyl-tRNA(Gln) + L-glutamine + ATP + H2O = L-glutaminyl-tRNA(Gln) + L-glutamate + ADP + phosphate + H(+). Functionally, allows the formation of correctly charged Gln-tRNA(Gln) through the transamidation of misacylated Glu-tRNA(Gln) in organisms which lack glutaminyl-tRNA synthetase. The reaction takes place in the presence of glutamine and ATP through an activated gamma-phospho-Glu-tRNA(Gln). This chain is Glutamyl-tRNA(Gln) amidotransferase subunit A, found in Wolbachia sp. subsp. Brugia malayi (strain TRS).